The sequence spans 726 residues: Cyclin-T1 (726 aa).

A Phosphoserine modification is found at Ser117. Residues 253 to 270 (KRIWNWRACEAAKKTKAD) carry the Nuclear localization signal, and interaction with Tat-TAR RNA motif. Position 340 is a phosphoserine (Ser340). Residue Lys342 forms a Glycyl lysine isopeptide (Lys-Gly) (interchain with G-Cter in SUMO2) linkage. The interval 360–385 (VDHSLPQDGSNAFISQKQNSKSVPSA) is disordered. The segment covering 366–382 (QDGSNAFISQKQNSKSV) has biased composition (polar residues). A coiled-coil region spans residues 384-425 (SAKVSLKEYRAKHAEELAAQKRQLENMEANVKSQYAYAAQNL). Ser388 carries the phosphoserine modification. An N6-acetyllysine modification is found at Lys390. A Glycyl lysine isopeptide (Lys-Gly) (interchain with G-Cter in SUMO2) cross-link involves residue Lys415. An ADP-ribosylserine mark is found at Ser416, Ser474, and Ser475. The histidine-rich domain (HRD) stretch occupies residues 480-550 (IKMRIKVHAA…RPGDPKHSSQ (71 aa)). Lys481 participates in a covalent cross-link: Glycyl lysine isopeptide (Lys-Gly) (interchain with G-Cter in SUMO2). Position 485 is an N6-(ADP-ribosyl)lysine (Lys485). At His487 the chain carries ADP-ribosylhistidine. Basic and acidic residues predominate over residues 487–506 (HAAADKHNSVEDSVTKSREH). 2 disordered regions span residues 487 to 650 (HAAA…NGHN) and 688 to 726 (SDYLNPRSGGISSRSGNTDKPRPPPLPSEPPPPLPPLPK). Phosphoserine is present on residues Ser495 and Ser499. A compositionally biased stretch (basic residues) spans 507 to 530 (KEKHKTHPSNHHHHHNHHSHKHSH). The interval 527 to 570 (KHSHSQLPVGTGNKRPGDPKHSSQTSNLAHKTYSLSSSFSSSSS) is required for interaction with ZMYND8. His530 carries the ADP-ribosylhistidine modification. ADP-ribosylserine is present on residues Ser531, Ser549, and Ser552. His556 carries the ADP-ribosylhistidine modification. Residues 560 to 570 (SLSSSFSSSSS) are compositionally biased toward low complexity. At Ser563 the chain carries ADP-ribosylserine. A phosphoserine mark is found at Ser564 and Ser577. The segment covering 594–609 (STKSSSLNFSFPSLPT) has biased composition (low complexity). Over residues 615 to 630 (GHSSDTSGLSFSQPSC) the composition is skewed to polar residues. Ser637 bears the ADP-ribosylserine mark. The span at 710-726 (PPPLPSEPPPPLPPLPK) shows a compositional bias: pro residues.

It belongs to the cyclin family. Cyclin C subfamily. In terms of assembly, cyclin-T1 is the predominant cyclin that associates with CDK9 to form a heterodimer called P-TEFb. P-TEFb forms a complex with AFF4/AF5Q31. Component of a complex which is at least composed of HTATSF1/Tat-SF1, P-TEFb complex, RNA pol II, SUPT5H, and NCL/nucleolin. Component of the 7SK snRNP complex at least composed of P-TEFb (composed of CDK9 and CCNT1/cyclin-T1), HEXIM1, HEXIM2, BCDIN3, SART3 proteins and 7SK and U6 snRNAs. Interacts (via central region) with ZMYND8 (via N-terminus); the interaction is direct and the association appears to occur between homodimeric ZMYND8 and the activated form of the P-TEFb complex. Interacts with BRD4, targets chromatin binding. Interacts with JMJD6. Interacts with MDFIC. Interacts with HSF1. Interacts with HTATSF1. Interacts with TBX21. As to quaternary structure, (Microbial infection) Interacts with the transactivation region of HIV-1, HIV-2 and SIV Tat. (Microbial infection) Interacts with human herpes virus 1 (HHV-1) transcriptional regulator ICP22. ADP-ribosylation on serine residues by PARP1 in response to DNA damage disrupts the phase separation activity of CCNT1, thereby preventing activation of CDK9. Ubiquitously expressed.

It is found in the nucleus. In terms of biological role, regulatory subunit of the cyclin-dependent kinase pair (CDK9/cyclin-T1) complex, also called positive transcription elongation factor B (P-TEFb), which facilitates the transition from abortive to productive elongation by phosphorylating the CTD (C-terminal domain) of the large subunit of RNA polymerase II (RNA Pol II). Required to activate the protein kinase activity of CDK9: acts by mediating formation of liquid-liquid phase separation (LLPS) that enhances binding of P-TEFb to the CTD of RNA Pol II. (Microbial infection) In case of HIV or SIV infections, binds to the transactivation domain of the viral nuclear transcriptional activator, Tat, thereby increasing Tat's affinity for the transactivating response RNA element (TAR RNA). Serves as an essential cofactor for Tat, by promoting RNA Pol II activation, allowing transcription of viral genes. The chain is Cyclin-T1 (CCNT1) from Homo sapiens (Human).